The sequence spans 578 residues: Phosphoenolpyruvate-protein phosphotransferase (578 aa).

H195 (tele-phosphohistidine intermediate) is an active-site residue. Residues R302 and R338 each contribute to the phosphoenolpyruvate site. E437 and D461 together coordinate Mg(2+). Residues 460 to 461 (ND) and R471 contribute to the phosphoenolpyruvate site. The active-site Proton donor is the C508.

This sequence belongs to the PEP-utilizing enzyme family. In terms of assembly, homodimer. The cofactor is Mg(2+).

It is found in the cytoplasm. It carries out the reaction L-histidyl-[protein] + phosphoenolpyruvate = N(pros)-phospho-L-histidyl-[protein] + pyruvate. Its function is as follows. General (non sugar-specific) component of the phosphoenolpyruvate-dependent sugar phosphotransferase system (sugar PTS). This major carbohydrate active-transport system catalyzes the phosphorylation of incoming sugar substrates concomitantly with their translocation across the cell membrane. Enzyme I transfers the phosphoryl group from phosphoenolpyruvate (PEP) to the phosphoryl carrier protein (HPr). The protein is Phosphoenolpyruvate-protein phosphotransferase (ptsI) of Geobacillus stearothermophilus (Bacillus stearothermophilus).